Here is a 422-residue protein sequence, read N- to C-terminus: Blood group Rh(D) polypeptide (422 aa).

12 helical membrane-spanning segments follow: residues Leu13–Gly33, Phe43–Phe63, Val76–Phe96, Phe113–Gly135, Val137–Ala159, Ile170–Leu190, Leu215–Leu235, Ala244–Ser266, Ile272–Ser292, Leu294–Trp314, Tyr335–Ala355, and Val372–Leu392.

This sequence belongs to the ammonium transporter (TC 2.A.49) family. Rh subfamily. In terms of processing, palmitoylated.

Its subcellular location is the cell membrane. Functionally, may be part of an oligomeric complex which is likely to have a transport or channel function in the erythrocyte membrane. This Rattus norvegicus (Rat) protein is Blood group Rh(D) polypeptide (Rhd).